The sequence spans 424 residues: Serine--tRNA ligase (424 aa).

233–235 (TAE) contacts L-serine. 264–266 (RKE) contacts ATP. An L-serine-binding site is contributed by Glu287. Residue 351 to 354 (EISS) coordinates ATP. L-serine is bound at residue Ser386.

It belongs to the class-II aminoacyl-tRNA synthetase family. Type-1 seryl-tRNA synthetase subfamily. In terms of assembly, homodimer. The tRNA molecule binds across the dimer.

The protein resides in the cytoplasm. The catalysed reaction is tRNA(Ser) + L-serine + ATP = L-seryl-tRNA(Ser) + AMP + diphosphate + H(+). It catalyses the reaction tRNA(Sec) + L-serine + ATP = L-seryl-tRNA(Sec) + AMP + diphosphate + H(+). The protein operates within aminoacyl-tRNA biosynthesis; selenocysteinyl-tRNA(Sec) biosynthesis; L-seryl-tRNA(Sec) from L-serine and tRNA(Sec): step 1/1. In terms of biological role, catalyzes the attachment of serine to tRNA(Ser). Is also able to aminoacylate tRNA(Sec) with serine, to form the misacylated tRNA L-seryl-tRNA(Sec), which will be further converted into selenocysteinyl-tRNA(Sec). In Elusimicrobium minutum (strain Pei191), this protein is Serine--tRNA ligase.